Reading from the N-terminus, the 190-residue chain is Peptidyl-prolyl cis-trans isomerase A (190 aa).

The N-terminal stretch at Met-1–Ala-24 is a signal peptide. Residues Gly-27 to Val-188 form the PPIase cyclophilin-type domain.

The protein belongs to the cyclophilin-type PPIase family.

Its subcellular location is the periplasm. It carries out the reaction [protein]-peptidylproline (omega=180) = [protein]-peptidylproline (omega=0). Its function is as follows. PPIases accelerate the folding of proteins. It catalyzes the cis-trans isomerization of proline imidic peptide bonds in oligopeptides. This is Peptidyl-prolyl cis-trans isomerase A (ppiA) from Salmonella typhimurium (strain LT2 / SGSC1412 / ATCC 700720).